A 427-amino-acid polypeptide reads, in one-letter code: BRO1 domain-containing protein BROX homolog (427 aa).

Positions 1 to 427 (MSHWFHRNPI…PSNSSGCVIA (427 aa)) constitute a BRO1 domain.

Belongs to the BROX family.

The chain is BRO1 domain-containing protein BROX homolog from Caenorhabditis elegans.